The sequence spans 493 residues: Protein dml1 (493 aa).

Belongs to the misato family.

The protein localises to the mitochondrion. Functionally, involved in the partitioning of the mitochondrial organelle and mitochondrial DNA (mtDNA) inheritance. The polypeptide is Protein dml1 (dml1) (Aspergillus oryzae (strain ATCC 42149 / RIB 40) (Yellow koji mold)).